The chain runs to 420 residues: Zinc finger protein Pegasus (420 aa).

A Glycyl lysine isopeptide (Lys-Gly) (interchain with G-Cter in SUMO2) cross-link involves residue K5. C2H2-type zinc fingers lie at residues 82-104 (LKCR…IRIH), 110-132 (HRCH…MRSH), and 138-161 (YKCE…RRKH). Residue K185 forms a Glycyl lysine isopeptide (Lys-Gly) (interchain with G-Cter in SUMO2) linkage. Composition is skewed to polar residues over residues 223–236 (QTDS…TTPT) and 262–273 (LSSLPPENQNPA). Disordered stretches follow at residues 223 to 247 (QTDS…QELM) and 262 to 356 (LSSL…PALP). Residues 290–311 (QPSTQAVVSAVSASIPQSSSPT) show a composition bias toward low complexity. The span at 332–349 (SEPSAHTSTPSIGNSQPS) shows a compositional bias: polar residues. Residues 364–387 (HHCQHCDMYFFADNILYTIHMGCH) form a C2H2-type 4; degenerate zinc finger. Residues 393–417 (FQCNICGCKCKNKYDFACHFARGQH) form a C2H2-type 5 zinc finger.

It belongs to the Ikaros C2H2-type zinc-finger protein family. In terms of assembly, self-associates. Interacts with other family members; IKZF1, IKZF2, IKZF3 and IKZF4.

It is found in the nucleus. In terms of biological role, transcriptional repressor that binds the core 5'GNNTGTNG-3' DNA consensus sequence. Involved in megakaryocyte differentiation. In Pongo abelii (Sumatran orangutan), this protein is Zinc finger protein Pegasus (IKZF5).